Here is a 142-residue protein sequence, read N- to C-terminus: Large ribosomal subunit protein uL13 (142 aa).

Belongs to the universal ribosomal protein uL13 family. As to quaternary structure, part of the 50S ribosomal subunit.

Its function is as follows. This protein is one of the early assembly proteins of the 50S ribosomal subunit, although it is not seen to bind rRNA by itself. It is important during the early stages of 50S assembly. The protein is Large ribosomal subunit protein uL13 of Erwinia tasmaniensis (strain DSM 17950 / CFBP 7177 / CIP 109463 / NCPPB 4357 / Et1/99).